The chain runs to 63 residues: Large ribosomal subunit protein uL30 (63 aa).

Belongs to the universal ribosomal protein uL30 family. As to quaternary structure, part of the 50S ribosomal subunit.

The chain is Large ribosomal subunit protein uL30 from Coxiella burnetii (strain CbuK_Q154) (Coxiella burnetii (strain Q154)).